The following is a 284-amino-acid chain: 8-methylmenaquinol:fumarate reductase membrane anchor subunit (284 aa).

The MFR complex is composed of three subunits: a flavoprotein (SdhA), an iron-sulfur protein (SdhB), and one hydrophobic anchor protein (SdhE).

It localises to the periplasm. The protein resides in the cell membrane. The catalysed reaction is 8-methylmenaquinone-6 + succinate = 8-methylmenaquinol-6 + fumarate. Functionally, membrane anchor subunit of 8-methylmenaquinol:fumarate reductase (MFR), that catalyzes the reduction of fumarate using 8-methylmenaquinol-6 as electron donor. The complex shows no succinate oxidation activity. Is involved in anaerobic metabolism. SdhE likely contains the quinol/quinone binding site. The polypeptide is 8-methylmenaquinol:fumarate reductase membrane anchor subunit (Wolinella succinogenes (strain ATCC 29543 / DSM 1740 / CCUG 13145 / JCM 31913 / LMG 7466 / NCTC 11488 / FDC 602W) (Vibrio succinogenes)).